A 328-amino-acid polypeptide reads, in one-letter code: uncharacterized protein (328 aa).

2 coiled-coil regions span residues 67–190 (FKEQ…VLEE) and 223–251 (MAQR…DNMM).

This is an uncharacterized protein from Mus musculus (Mouse).